A 63-amino-acid polypeptide reads, in one-letter code: Cecropin-B (63 aa).

The first 22 residues, 1 to 22 (MNFAKILSFVFALVLALSMTSA), serve as a signal peptide directing secretion. The propeptide at 23–26 (APEP) is removed by a dipeptidylpeptidase. Residue Lys47 is modified to 5-hydroxylysine; partial. The residue at position 61 (Ile61) is an Isoleucine amide.

It belongs to the cecropin family. Post-translationally, lepidopteran-B differs from lepidopteran-A by its hydroxylated residue. In terms of tissue distribution, highest expression in fat body and hemocytes. Is also expressed in Malpighian tubules and to a much lesser extent in midgut. Not present in silk gland.

The protein localises to the secreted. In terms of biological role, cecropins have lytic and antibacterial activity against several Gram-positive and Gram-negative bacteria. In Bombyx mori (Silk moth), this protein is Cecropin-B (CECB1).